Here is a 371-residue protein sequence, read N- to C-terminus: MVEAIHRSTRIEFSKSSLAYNVQYTKQVSGAKTLWLAVKSNAYGHGLLQVSKIARECGVDGLAVSVLDEGIAIRQAGIDDFILILGPIDVKYAPIASKYHFLTTVSSLDWLKSADKILGKEKLSVNLAVDTGMNRIGVRSKKDLKDEIEFLQEHSDHFSYDGIFTHFASSDNPDDHYFQRQKNRWYELIDGLIMPRYVHVMNSGAAMYHSKELPGCNSIARVGTVVYGVEPSEGVLGPIDKLKPVFELKSALTFVKKIPAGEGISYGSKFVTSRDTWIGTLPIGYGDGWLAEYQDFQLLIDGQKCRQVGQIAMDQMMVALPHEYPIGTEVTLIGKSGKYENTLYDLHKHSGVPPWKITVAFSDRLKRMVVD.

The Proton acceptor role is filled by lysine 39. The residue at position 39 (lysine 39) is an N6-(pyridoxal phosphate)lysine. Arginine 135 is a binding site for substrate. Tyrosine 266 serves as the catalytic Proton acceptor. Position 313 (methionine 313) interacts with substrate.

This sequence belongs to the alanine racemase family. As to quaternary structure, homodimer. The cofactor is pyridoxal 5'-phosphate.

It carries out the reaction L-lysine = D-lysine. Its function is as follows. Catalyzes the interconversion of D-lysine and L-lysine. Can also use arginine and ornithine, but not alanine. The protein is Lysine racemase of Oenococcus oeni (strain ATCC BAA-331 / PSU-1).